We begin with the raw amino-acid sequence, 245 residues long: MIKLVLIRHGQSLWNLENRFTGWTDVDLSEKGLSEAREAGAILKKNGYTFDVAYTSVLKRAIRTLWIVLHEMDLAWVPVHKCWKLNERHYGALQGLNKDETAQKYGEEQVHIWRRSIDVRPPALTEDDPRYEMNDPRYKALKKGEFPLTECLVDTEKRVLAYWHSEIAPKLKNGNKVIISSHGNTIRSLVKYLDNLSSDGVVSLNIPTSIPLVYELDENLRPIRHYYLSMDGEVPEGEIPKHITF.

Substrate is bound by residues 8–15, 21–22, R60, 87–90, K98, 114–115, and 183–184; these read RHGQSLWN, TG, ERHY, RR, and GN. The active-site Tele-phosphohistidine intermediate is H9. The active-site Proton donor/acceptor is the E87.

It belongs to the phosphoglycerate mutase family. BPG-dependent PGAM subfamily.

The catalysed reaction is (2R)-2-phosphoglycerate = (2R)-3-phosphoglycerate. Its pathway is carbohydrate degradation; glycolysis; pyruvate from D-glyceraldehyde 3-phosphate: step 3/5. Catalyzes the interconversion of 2-phosphoglycerate and 3-phosphoglycerate. In Bacillus cereus (strain AH187), this protein is 2,3-bisphosphoglycerate-dependent phosphoglycerate mutase.